Consider the following 79-residue polypeptide: Conotoxin VnMEKL-024 (79 aa).

The N-terminal stretch at 1–19 is a signal peptide; that stretch reads MQKLTILLLVAAVLMSTQA. The propeptide occupies 20 to 50; sequence LIRGGVEKRQEAKRNFFSKRKTTAESWWEGE. 3 disulfide bridges follow: cysteine 51-cysteine 65, cysteine 58-cysteine 69, and cysteine 64-cysteine 76.

The protein belongs to the conotoxin O2 superfamily. Expressed by the venom duct.

The protein resides in the secreted. The protein is Conotoxin VnMEKL-024 of Conus ventricosus (Mediterranean cone).